Consider the following 438-residue polypeptide: 3-phosphoshikimate 1-carboxyvinyltransferase (438 aa).

Lys21, Ser22, and Arg26 together coordinate 3-phosphoshikimate. Lys21 provides a ligand contact to phosphoenolpyruvate. The phosphoenolpyruvate site is built by Gly95 and Arg123. 3-phosphoshikimate is bound by residues Ser167, Gln169, Asp315, and Lys342. Gln169 is a phosphoenolpyruvate binding site. Catalysis depends on Asp315, which acts as the Proton acceptor. Positions 346 and 387 each coordinate phosphoenolpyruvate.

The protein belongs to the EPSP synthase family. As to quaternary structure, monomer.

The protein localises to the cytoplasm. It carries out the reaction 3-phosphoshikimate + phosphoenolpyruvate = 5-O-(1-carboxyvinyl)-3-phosphoshikimate + phosphate. It functions in the pathway metabolic intermediate biosynthesis; chorismate biosynthesis; chorismate from D-erythrose 4-phosphate and phosphoenolpyruvate: step 6/7. Catalyzes the transfer of the enolpyruvyl moiety of phosphoenolpyruvate (PEP) to the 5-hydroxyl of shikimate-3-phosphate (S3P) to produce enolpyruvyl shikimate-3-phosphate and inorganic phosphate. This chain is 3-phosphoshikimate 1-carboxyvinyltransferase, found in Coxiella burnetii (strain CbuK_Q154) (Coxiella burnetii (strain Q154)).